A 137-amino-acid chain; its full sequence is Nucleoside diphosphate kinase (137 aa).

Residues lysine 9, phenylalanine 57, arginine 85, threonine 91, arginine 102, and asparagine 112 each coordinate ATP. The Pros-phosphohistidine intermediate role is filled by histidine 115.

Belongs to the NDK family. Homotetramer. Mg(2+) is required as a cofactor.

The protein localises to the cytoplasm. It carries out the reaction a 2'-deoxyribonucleoside 5'-diphosphate + ATP = a 2'-deoxyribonucleoside 5'-triphosphate + ADP. The enzyme catalyses a ribonucleoside 5'-diphosphate + ATP = a ribonucleoside 5'-triphosphate + ADP. Its function is as follows. Major role in the synthesis of nucleoside triphosphates other than ATP. The ATP gamma phosphate is transferred to the NDP beta phosphate via a ping-pong mechanism, using a phosphorylated active-site intermediate. In Desulfotalea psychrophila (strain LSv54 / DSM 12343), this protein is Nucleoside diphosphate kinase.